The following is a 200-amino-acid chain: Cytochrome c biogenesis ATP-binding export protein CcmA (200 aa).

In terms of domain architecture, ABC transporter spans Leu-3–Ala-200. ATP is bound at residue Gly-35–Thr-42.

This sequence belongs to the ABC transporter superfamily. CcmA exporter (TC 3.A.1.107) family. As to quaternary structure, the complex is composed of two ATP-binding proteins (CcmA) and two transmembrane proteins (CcmB).

The protein localises to the cell inner membrane. It carries out the reaction heme b(in) + ATP + H2O = heme b(out) + ADP + phosphate + H(+). In terms of biological role, part of the ABC transporter complex CcmAB involved in the biogenesis of c-type cytochromes; once thought to export heme, this seems not to be the case, but its exact role is uncertain. Responsible for energy coupling to the transport system. This chain is Cytochrome c biogenesis ATP-binding export protein CcmA, found in Rhodopseudomonas palustris (strain BisB5).